The chain runs to 155 residues: Large ribosomal subunit protein uL22c (155 aa).

This sequence belongs to the universal ribosomal protein uL22 family. In terms of assembly, part of the 50S ribosomal subunit.

It localises to the plastid. The protein resides in the chloroplast. Its function is as follows. This protein binds specifically to 23S rRNA. The globular domain of the protein is located near the polypeptide exit tunnel on the outside of the subunit, while an extended beta-hairpin is found that lines the wall of the exit tunnel in the center of the 70S ribosome. The chain is Large ribosomal subunit protein uL22c (rpl22) from Solanum bulbocastanum (Wild potato).